Reading from the N-terminus, the 243-residue chain is Probable ubiquitin-conjugating enzyme E2 33 (243 aa).

The region spanning 5–162 is the UBC core domain; sequence ACIKRLQKEY…FPEYVEKYSQ (158 aa). The Glycyl thioester intermediate role is filled by Cys-87. Residues 168-197 are disordered; that stretch reads EEAATQQTTTSENQDFPQKDNAKVESEKSV. The span at 184-197 shows a compositional bias: basic and acidic residues; that stretch reads PQKDNAKVESEKSV. The chain crosses the membrane as a helical span at residues 220–240; the sequence is LPGWIVLLLVSIVGVVMALPL.

Belongs to the ubiquitin-conjugating enzyme family.

It is found in the membrane. It catalyses the reaction S-ubiquitinyl-[E1 ubiquitin-activating enzyme]-L-cysteine + [E2 ubiquitin-conjugating enzyme]-L-cysteine = [E1 ubiquitin-activating enzyme]-L-cysteine + S-ubiquitinyl-[E2 ubiquitin-conjugating enzyme]-L-cysteine.. Its pathway is protein modification; protein ubiquitination. Functionally, accepts the ubiquitin from the E1 complex and catalyzes its covalent attachment to other proteins. The protein is Probable ubiquitin-conjugating enzyme E2 33 (UBC33) of Arabidopsis thaliana (Mouse-ear cress).